The sequence spans 382 residues: MKLKRQKPKEKFSYDPQKVLKKLEDLAWKILEEAKSGKNPYFDVPTRGLNNVYFDEESRLIRLGDRLSRRYFLNVAHARKFMQTLILMAYIKRLVSEGKHASLREAYYANKHTVPGTRENTFEDQSESDPIIEDLERMLGVLREEMHITADRRGYIYGDIVIKDGEDEFNASKLGTGGWAVPGTVEHIQFPEINVDYVLVVETAAMADRLIEEKYPKRENCLIVATQGQASRGVRRLIHRLHYEEGLPIIVFTDGDPYGWYIYSTIKRGSINLAYLSEKLATPDAKFVGMTMDDIKEYNLENVTEKLKGIPPDKKGGPTGDYKRLIEELNYPWFQDKEWQRQLKLALKWGVRIEQQALANKSLEFVAKEYLPEKIREGKLLP.

Residues 14-155 (YDPQKVLKKL…MHITADRRGY (142 aa)) enclose the Topo IIA-type catalytic domain. Tyr-108 serves as the catalytic O-(5'-phospho-DNA)-tyrosine intermediate. Mg(2+) contacts are provided by Glu-202 and Asp-254.

The protein belongs to the TOP6A family. In terms of assembly, homodimer. Heterotetramer of two Top6A and two Top6B chains. Mg(2+) is required as a cofactor.

The catalysed reaction is ATP-dependent breakage, passage and rejoining of double-stranded DNA.. Functionally, relaxes both positive and negative superturns and exhibits a strong decatenase activity. In Pyrococcus horikoshii (strain ATCC 700860 / DSM 12428 / JCM 9974 / NBRC 100139 / OT-3), this protein is Type 2 DNA topoisomerase 6 subunit A.